The sequence spans 510 residues: Cobyric acid synthase (510 aa).

A GATase cobBQ-type domain is found at 262–460 (EIKVGIIKLP…IHGIFENDEW (199 aa)). Cys343 acts as the Nucleophile in catalysis. The active site involves His452.

This sequence belongs to the CobB/CobQ family. CobQ subfamily.

The protein operates within cofactor biosynthesis; adenosylcobalamin biosynthesis. Its function is as follows. Catalyzes amidations at positions B, D, E, and G on adenosylcobyrinic A,C-diamide. NH(2) groups are provided by glutamine, and one molecule of ATP is hydrogenolyzed for each amidation. The sequence is that of Cobyric acid synthase from Prochlorococcus marinus (strain MIT 9515).